The following is a 138-amino-acid chain: D-ribose pyranase (138 aa).

The Proton donor role is filled by His-20. Substrate contacts are provided by residues Asp-28, His-105, and Tyr-127 to Asn-129.

Belongs to the RbsD / FucU family. RbsD subfamily. Homodecamer.

It localises to the cytoplasm. The enzyme catalyses beta-D-ribopyranose = beta-D-ribofuranose. It functions in the pathway carbohydrate metabolism; D-ribose degradation; D-ribose 5-phosphate from beta-D-ribopyranose: step 1/2. Its function is as follows. Catalyzes the interconversion of beta-pyran and beta-furan forms of D-ribose. This Psychromonas ingrahamii (strain DSM 17664 / CCUG 51855 / 37) protein is D-ribose pyranase.